We begin with the raw amino-acid sequence, 127 residues long: Small ribosomal subunit protein uS11 (127 aa).

It belongs to the universal ribosomal protein uS11 family. As to quaternary structure, part of the 30S ribosomal subunit.

Its function is as follows. Located on the platform of the 30S subunit. The polypeptide is Small ribosomal subunit protein uS11 (Picrophilus torridus (strain ATCC 700027 / DSM 9790 / JCM 10055 / NBRC 100828 / KAW 2/3)).